A 489-amino-acid chain; its full sequence is Putative BTB/POZ domain-containing protein R773 (489 aa).

The 71-residue stretch at 3–73 folds into the BTB domain; sequence SNIELVITDE…GNTSYKFQDK (71 aa).

This sequence belongs to the mimivirus BTB/WD family.

This chain is Putative BTB/POZ domain-containing protein R773, found in Acanthamoeba polyphaga (Amoeba).